Here is a 123-residue protein sequence, read N- to C-terminus: Large ribosomal subunit protein bL12 (123 aa).

It belongs to the bacterial ribosomal protein bL12 family. In terms of assembly, homodimer. Part of the ribosomal stalk of the 50S ribosomal subunit. Forms a multimeric L10(L12)X complex, where L10 forms an elongated spine to which 2 to 4 L12 dimers bind in a sequential fashion. Binds GTP-bound translation factors.

Its function is as follows. Forms part of the ribosomal stalk which helps the ribosome interact with GTP-bound translation factors. Is thus essential for accurate translation. This chain is Large ribosomal subunit protein bL12, found in Clostridium acetobutylicum (strain ATCC 824 / DSM 792 / JCM 1419 / IAM 19013 / LMG 5710 / NBRC 13948 / NRRL B-527 / VKM B-1787 / 2291 / W).